The sequence spans 492 residues: MVPVIALVGRPNVGKSTLFNRLTRSRDAIVGDLSGLTRDRQYGEAKWQGRTYIVIDTGGISGDEEGIDAKMAEQSLQAIEEADAVLFLVDARAGMTASDQMIGEHLRRRNKRSFLVVNKVDNLDVDLARAEFSPMGLGEPLAIAGAHGRGITQMLEAVLGIFPKDAGEPEEGAEAEEEVQEGQEAKRIPGPSEKDGIKLAIIGRPNVGKSTLVNRMLGEERVIVYDQAGTTRDSIYIPFERDDEKYTLIDTAGVRRRGKIFEAVEKFSVVKTLQAIQDSNVVVFVMDAREGVVDHDLNLLGFVLESGRALVIALNKWDGMDQGQKDYVKTELERRLFFVDFADIHFISALHGTGVGHLYKSVQAAFHSAVTRWPTSRLTQILEDAVSDHAPPLVNGRRIKLRYAHLGGANPPLIVIHGNQVDAVPRAYTRYLENTFRRVLKLVGTPIRIEYKGGENPYEGNKNKLTDRQVNKKRRLMSHHKKAEKKRKDKRK.

An EngA-type G 1 domain is found at 3 to 166 (PVIALVGRPN…AVLGIFPKDA (164 aa)). Residues 9–16 (GRPNVGKS), 56–60 (DTGGI), and 118–121 (NKVD) each bind GTP. The interval 166–190 (AGEPEEGAEAEEEVQEGQEAKRIPG) is disordered. Acidic residues predominate over residues 168–181 (EPEEGAEAEEEVQE). In terms of domain architecture, EngA-type G 2 spans 197 to 370 (IKLAIIGRPN…SVQAAFHSAV (174 aa)). GTP contacts are provided by residues 203-210 (GRPNVGKS), 250-254 (DTAGV), and 315-318 (NKWD). The 85-residue stretch at 371-455 (TRWPTSRLTQ…PIRIEYKGGE (85 aa)) folds into the KH-like domain. The tract at residues 453-492 (GGENPYEGNKNKLTDRQVNKKRRLMSHHKKAEKKRKDKRK) is disordered. Basic and acidic residues predominate over residues 461–470 (NKNKLTDRQV). The segment covering 471 to 492 (NKKRRLMSHHKKAEKKRKDKRK) has biased composition (basic residues).

Belongs to the TRAFAC class TrmE-Era-EngA-EngB-Septin-like GTPase superfamily. EngA (Der) GTPase family. Associates with the 50S ribosomal subunit.

In terms of biological role, GTPase that plays an essential role in the late steps of ribosome biogenesis. This is GTPase Der from Ectopseudomonas mendocina (strain ymp) (Pseudomonas mendocina).